Reading from the N-terminus, the 838-residue chain is Periostin (838 aa).

An N-terminal signal peptide occupies residues 1–23 (MVPLLPLYALLLLFLCDINPANA). The 55-residue stretch at 42–96 (GPNVCALQQILGTKKKYFSSCKNWYQGAICGKKTTVLYECCPGYMRMEGMKGCPA) folds into the EMI domain. 5 disulfides stabilise this stretch: cysteine 46/cysteine 82, cysteine 71/cysteine 335, cysteine 81/cysteine 94, cysteine 210/cysteine 313, and cysteine 469/cysteine 474. Cysteine 62 bears the S-cysteinyl cysteine mark. FAS1 domains are found at residues 99-232 (PIDH…DRVL), 236-367 (GTSI…DEVL), 370-494 (DSAK…REII), and 498-630 (EKSL…DKLL). Residue asparagine 601 is glycosylated (N-linked (GlcNAc...) asparagine). The segment at 811 to 838 (QGDTPAKKIPANKRVQGPRRRSREGRSQ) is disordered. The segment covering 826–838 (QGPRRRSREGRSQ) has biased composition (basic residues).

In terms of assembly, homodimer. Interacts with BMP1 and fibronectin. Gamma-carboxylation is controversial. Gamma-carboxyglutamated; gamma-carboxyglutamate residues are formed by vitamin K dependent carboxylation; these residues may be required for binding to calcium. According to a more recent report in human, does not contain vitamin K-dependent gamma-carboxyglutamate residues. As to expression, preferentially expressed in periosteum and periodontal ligament. Also expressed in the developing and adult heart.

The protein resides in the golgi apparatus. It is found in the secreted. It localises to the extracellular space. Its subcellular location is the extracellular matrix. Induces cell attachment and spreading and plays a role in cell adhesion. Enhances incorporation of BMP1 in the fibronectin matrix of connective tissues, and subsequent proteolytic activation of lysyl oxidase LOX. The chain is Periostin (Postn) from Mus musculus (Mouse).